A 387-amino-acid polypeptide reads, in one-letter code: Methionine aminopeptidase 1 (387 aa).

Position 2 is an N-acetylserine (Ser2). The propeptide occupies 2 to 10; it reads STATTTVTT. A C6H2-type zinc finger spans residues 19 to 73; that stretch reads KIYCSGLQCGRETSSQMKCPVCLKQGIVSIFCDTSCYENNYKAHKALHNAKDGLE. Positions 22, 27, 37, 40, 50, 54, 62, and 66 each coordinate Zn(2+). His202 is a binding site for a protein. 3 residues coordinate Zn(2+): Asp219, Asp230, and His294. A protein is bound at residue His301. Positions 327 and 358 each coordinate Zn(2+).

It belongs to the peptidase M24A family. Methionine aminopeptidase type 1 subfamily. Associates with the 60S ribosomal subunit of the 80S translational complex. Requires Zn(2+) as cofactor. The cofactor is Co(2+). Mn(2+) serves as cofactor. It depends on Fe(2+) as a cofactor.

It is found in the cytoplasm. It carries out the reaction Release of N-terminal amino acids, preferentially methionine, from peptides and arylamides.. Its activity is regulated as follows. In contract to the MetAP 2 isoform, is not inhibited by the fungal metabolite fumagillin, an antiangiogenic drug. Functionally, cotranslationally removes the N-terminal methionine from nascent proteins. The N-terminal methionine is often cleaved when the second residue in the primary sequence is small and uncharged (Met-Ala-, Cys, Gly, Pro, Ser, Thr, or Val). Plays the major role in N-terminal methionine removal. Less efficient when the second residue is Val. The polypeptide is Methionine aminopeptidase 1 (MAP1) (Saccharomyces cerevisiae (strain ATCC 204508 / S288c) (Baker's yeast)).